The sequence spans 278 residues: tRNA (guanine-N(7)-)-methyltransferase (278 aa).

S-adenosyl-L-methionine is bound by residues Gly95, 118-119 (EI), 153-154 (NA), and Cys173. Residue Asp176 is part of the active site. 251-253 (TEE) provides a ligand contact to S-adenosyl-L-methionine.

It belongs to the class I-like SAM-binding methyltransferase superfamily. TrmB family. In terms of assembly, forms a complex with TRM82.

It localises to the nucleus. The catalysed reaction is guanosine(46) in tRNA + S-adenosyl-L-methionine = N(7)-methylguanosine(46) in tRNA + S-adenosyl-L-homocysteine. The protein operates within tRNA modification; N(7)-methylguanine-tRNA biosynthesis. In terms of biological role, catalyzes the formation of N(7)-methylguanine at position 46 (m7G46) in tRNA. This is tRNA (guanine-N(7)-)-methyltransferase from Kluyveromyces lactis (strain ATCC 8585 / CBS 2359 / DSM 70799 / NBRC 1267 / NRRL Y-1140 / WM37) (Yeast).